Consider the following 225-residue polypeptide: Cytidylate kinase (225 aa).

12-20 (GPSGAGKGT) contacts ATP.

This sequence belongs to the cytidylate kinase family. Type 1 subfamily.

It localises to the cytoplasm. It catalyses the reaction CMP + ATP = CDP + ADP. It carries out the reaction dCMP + ATP = dCDP + ADP. The chain is Cytidylate kinase from Stenotrophomonas maltophilia (strain R551-3).